Here is a 160-residue protein sequence, read N- to C-terminus: S-adenosylmethionine decarboxylase proenzyme (160 aa).

The active-site Schiff-base intermediate with substrate; via pyruvic acid is the Ser-73. Pyruvic acid (Ser); by autocatalysis is present on Ser-73. The active-site Proton acceptor; for processing activity is His-78. Cys-93 functions as the Proton donor; for catalytic activity in the catalytic mechanism.

This sequence belongs to the prokaryotic AdoMetDC family. Type 1 subfamily. In terms of assembly, heterotetramer of two alpha and two beta chains arranged as a dimer of alpha/beta heterodimers. Requires pyruvate as cofactor. Post-translationally, is synthesized initially as an inactive proenzyme. Formation of the active enzyme involves a self-maturation process in which the active site pyruvoyl group is generated from an internal serine residue via an autocatalytic post-translational modification. Two non-identical subunits are generated from the proenzyme in this reaction, and the pyruvate is formed at the N-terminus of the alpha chain, which is derived from the carboxyl end of the proenzyme. The post-translation cleavage follows an unusual pathway, termed non-hydrolytic serinolysis, in which the side chain hydroxyl group of the serine supplies its oxygen atom to form the C-terminus of the beta chain, while the remainder of the serine residue undergoes an oxidative deamination to produce ammonia and the pyruvoyl group blocking the N-terminus of the alpha chain.

The enzyme catalyses S-adenosyl-L-methionine + H(+) = S-adenosyl 3-(methylsulfanyl)propylamine + CO2. The protein operates within amine and polyamine biosynthesis; S-adenosylmethioninamine biosynthesis; S-adenosylmethioninamine from S-adenosyl-L-methionine: step 1/1. In terms of biological role, catalyzes the decarboxylation of S-adenosylmethionine to S-adenosylmethioninamine (dcAdoMet), the propylamine donor required for the synthesis of the polyamines spermine and spermidine from the diamine putrescine. The protein is S-adenosylmethionine decarboxylase proenzyme of Pseudomonas aeruginosa (strain LESB58).